We begin with the raw amino-acid sequence, 242 residues long: NAD-dependent protein deacetylase (242 aa).

Residues 1 to 242 form the Deacetylase sirtuin-type domain; that stretch reads MQQFEEVHSI…EFVEGLSSRK (242 aa). NAD(+)-binding residues include Ala-23, Thr-27, Phe-34, Arg-35, Gln-102, Ile-104, Asp-105, and His-120. Phe-34 contributes to the nicotinamide binding site. 2 residues coordinate nicotinamide: Ile-104 and Asp-105. Catalysis depends on His-120, which acts as the Proton acceptor. Positions 128, 131, 148, and 151 each coordinate Zn(2+). Positions 187, 188, 213, and 231 each coordinate NAD(+).

It belongs to the sirtuin family. Class U subfamily. The cofactor is Zn(2+).

Its subcellular location is the cytoplasm. The enzyme catalyses N(6)-acetyl-L-lysyl-[protein] + NAD(+) + H2O = 2''-O-acetyl-ADP-D-ribose + nicotinamide + L-lysyl-[protein]. Its function is as follows. NAD-dependent protein deacetylase which modulates the activities of several enzymes which are inactive in their acetylated form. The protein is NAD-dependent protein deacetylase of Bacillus cereus (strain ATCC 10987 / NRS 248).